A 226-amino-acid chain; its full sequence is Glutathione S-transferase kappa 1 (226 aa).

Residues 15 to 17 (SPY), Asn53, and 199 to 200 (SD) each bind glutathione.

This sequence belongs to the GST superfamily. Kappa family.

The catalysed reaction is RX + glutathione = an S-substituted glutathione + a halide anion + H(+). The protein is Glutathione S-transferase kappa 1 (gstk-1) of Caenorhabditis elegans.